We begin with the raw amino-acid sequence, 522 residues long: Transactivator/viroplasmin protein (522 aa).

Residues 111 to 126 show a composition bias toward polar residues; sequence QGIQIPQKSEPNSSVA. 2 disordered regions span residues 111–133 and 491–522; these read QGIQIPQKSEPNSSVAPNRAESG and SADSKVADKEGPPLTTNVEKEDVSTTSSKASG.

This sequence belongs to the caulimoviridae viroplasmin family.

The protein resides in the host cytoplasm. Functionally, enhances the ribosomal termination-reinitiation event leading to the translation of major open reading frames on the polycistronic viral RNAs. The protein is Transactivator/viroplasmin protein of Arabidopsis thaliana (Mouse-ear cress).